A 553-amino-acid polypeptide reads, in one-letter code: Hydroxylamine reductase (553 aa).

Cys-3, Cys-6, Cys-18, and Cys-25 together coordinate [2Fe-2S] cluster. His-252, Glu-276, Cys-320, Cys-408, Cys-436, Cys-461, Glu-495, and Lys-497 together coordinate hybrid [4Fe-2O-2S] cluster. Cysteine persulfide is present on Cys-408.

Belongs to the HCP family. Requires [2Fe-2S] cluster as cofactor. Hybrid [4Fe-2O-2S] cluster serves as cofactor.

It is found in the cytoplasm. It carries out the reaction A + NH4(+) + H2O = hydroxylamine + AH2 + H(+). In terms of biological role, catalyzes the reduction of hydroxylamine to form NH(3) and H(2)O. The protein is Hydroxylamine reductase of Vibrio parahaemolyticus serotype O3:K6 (strain RIMD 2210633).